Consider the following 681-residue polypeptide: Macrolide export ATP-binding/permease protein MacB (681 aa).

The 239-residue stretch at 6 to 244 folds into the ABC transporter domain; the sequence is LKLAAVTRRF…FAEVGVGAAA (239 aa). 42-49 contributes to the ATP binding site; it reads GASGSGKS. Low complexity predominate over residues 246–273; it reads TETAADTRSAPASGDAPPPANNDTAADP. Positions 246–298 are disordered; the sequence is TETAADTRSAPASGDAPPPANNDTAADPAPAPDASPPAPAVSPKHAGWRGSRS. Positions 274-285 are enriched in pro residues; sequence APAPDASPPAPA. Transmembrane regions (helical) follow at residues 306 to 326, 554 to 574, 611 to 631, and 644 to 664; these read CLTMLGIIIGITSVVSIVAVG, LTLLLSLIAVISLVVGGIGVM, LVCLLGGTIGIALSFGLGALF, and AGAIVTAFVCSTLTGVIFGFM.

This sequence belongs to the ABC transporter superfamily. Macrolide exporter (TC 3.A.1.122) family. As to quaternary structure, homodimer.

The protein resides in the cell inner membrane. In terms of biological role, non-canonical ABC transporter that contains transmembrane domains (TMD), which form a pore in the inner membrane, and an ATP-binding domain (NBD), which is responsible for energy generation. Confers resistance against macrolides. This chain is Macrolide export ATP-binding/permease protein MacB, found in Burkholderia orbicola (strain AU 1054).